We begin with the raw amino-acid sequence, 97 residues long: Large ribosomal subunit protein uL23 (97 aa).

Belongs to the universal ribosomal protein uL23 family. Part of the 50S ribosomal subunit. Contacts protein L29, and trigger factor when it is bound to the ribosome.

Functionally, one of the early assembly proteins it binds 23S rRNA. One of the proteins that surrounds the polypeptide exit tunnel on the outside of the ribosome. Forms the main docking site for trigger factor binding to the ribosome. This chain is Large ribosomal subunit protein uL23, found in Limosilactobacillus fermentum (strain NBRC 3956 / LMG 18251) (Lactobacillus fermentum).